The following is a 393-amino-acid chain: Acetylornithine aminotransferase 1 (393 aa).

Arg131 contributes to the N(2)-acetyl-L-ornithine binding site. 215–218 (DEVQ) lines the pyridoxal 5'-phosphate pocket. Lys244 carries the N6-(pyridoxal phosphate)lysine modification. A N(2)-acetyl-L-ornithine-binding site is contributed by Thr272. Thr273 provides a ligand contact to pyridoxal 5'-phosphate.

Belongs to the class-III pyridoxal-phosphate-dependent aminotransferase family. ArgD subfamily. Homodimer. Pyridoxal 5'-phosphate is required as a cofactor.

Its subcellular location is the cytoplasm. It carries out the reaction N(2)-acetyl-L-ornithine + 2-oxoglutarate = N-acetyl-L-glutamate 5-semialdehyde + L-glutamate. The protein operates within amino-acid biosynthesis; L-arginine biosynthesis; N(2)-acetyl-L-ornithine from L-glutamate: step 4/4. The chain is Acetylornithine aminotransferase 1 from Bordetella bronchiseptica (strain ATCC BAA-588 / NCTC 13252 / RB50) (Alcaligenes bronchisepticus).